The following is a 160-amino-acid chain: Protein CrtK (160 aa).

5 helical membrane passes run Leu-3–Phe-23, Trp-37–Ile-57, Leu-76–Leu-96, Gly-101–Trp-121, and Leu-129–Trp-149.

Belongs to the TspO/BZRP family.

The protein localises to the cell inner membrane. Its pathway is carotenoid biosynthesis; spheroidene biosynthesis. In Rhodobacter capsulatus (strain ATCC BAA-309 / NBRC 16581 / SB1003), this protein is Protein CrtK (crtK).